The chain runs to 348 residues: Dihydroorotase (348 aa).

Zn(2+)-binding residues include histidine 14 and histidine 16. Residues 16-18 and asparagine 42 contribute to the substrate site; that span reads HLR. Zn(2+)-binding residues include lysine 100, histidine 137, and histidine 175. Lysine 100 carries the N6-carboxylysine modification. Residue histidine 137 participates in substrate binding. Substrate is bound at residue leucine 220. Residue aspartate 248 coordinates Zn(2+). Aspartate 248 is a catalytic residue. Residues histidine 252 and alanine 264 each coordinate substrate.

Belongs to the metallo-dependent hydrolases superfamily. DHOase family. Class II DHOase subfamily. As to quaternary structure, homodimer. It depends on Zn(2+) as a cofactor.

The catalysed reaction is (S)-dihydroorotate + H2O = N-carbamoyl-L-aspartate + H(+). It functions in the pathway pyrimidine metabolism; UMP biosynthesis via de novo pathway; (S)-dihydroorotate from bicarbonate: step 3/3. In terms of biological role, catalyzes the reversible cyclization of carbamoyl aspartate to dihydroorotate. The chain is Dihydroorotase from Pseudomonas paraeruginosa (strain DSM 24068 / PA7) (Pseudomonas aeruginosa (strain PA7)).